The following is a 534-amino-acid chain: Beta-glucosidase 31 (534 aa).

The signal sequence occupies residues Met-1–Gly-22. Gln-51 provides a ligand contact to a beta-D-glucoside. N-linked (GlcNAc...) asparagine glycosylation is present at Asn-68. A beta-D-glucoside-binding positions include His-154 and Asn-199 to Glu-200. The active-site Proton donor is the Glu-200. Cysteines 219 and 227 form a disulfide. Tyr-344 lines the a beta-D-glucoside pocket. N-linked (GlcNAc...) asparagine glycosylation is present at Asn-374. Glu-417 serves as a coordination point for a beta-D-glucoside. Glu-417 acts as the Nucleophile in catalysis. An N-linked (GlcNAc...) asparagine glycan is attached at Asn-425. Residues Trp-467, Glu-474–Trp-475, and Phe-483 contribute to the a beta-D-glucoside site.

Belongs to the glycosyl hydrolase 1 family.

The enzyme catalyses Hydrolysis of terminal, non-reducing beta-D-glucosyl residues with release of beta-D-glucose.. The chain is Beta-glucosidase 31 from Arabidopsis thaliana (Mouse-ear cress).